A 200-amino-acid polypeptide reads, in one-letter code: Vacuolar iron transporter homolog 3 (200 aa).

Over 1-31 (MESHNTLNLDMEKDQEKAFDYSKRAQWLRAA) the chain is Cytoplasmic. The helical transmembrane segment at 32 to 52 (VLGANDGLVSTASLMMGVGAV) threads the bilayer. Topologically, residues 53–59 (KQNVKIM) are vacuolar. A helical transmembrane segment spans residues 60–80 (ILTGFAGLVAGACSMAIGEFV). The Cytoplasmic portion of the chain corresponds to 81–113 (SVYSQYDIEVAQMKRETGGEIEKEKLPSPTQAA). The helical transmembrane segment at 114–134 (AASALAFSLGAMVPLLAAAFV) threads the bilayer. The Vacuolar segment spans residues 135–140 (KEYKVR). Residues 141-161 (IGAIVAAVTLALVMFGWLGAV) traverse the membrane as a helical segment. At 162–173 (LGKAPVVKSSLR) the chain is on the cytoplasmic side. Residues 174-194 (VLVGGWLAMAITYGFTKLIGS) form a helical membrane-spanning segment. Over 195-200 (HSHMYV) the chain is Vacuolar.

The protein belongs to the CCC1 family.

It is found in the vacuole membrane. It carries out the reaction Fe(2+)(in) = Fe(2+)(out). Functionally, probable vacuolar iron transporter that may be involved in the regulation of iron distribution throughout the plant. This is Vacuolar iron transporter homolog 3 from Arabidopsis thaliana (Mouse-ear cress).